The following is a 238-amino-acid chain: Ribonuclease PH (238 aa).

Residues Arg86 and 124–126 (GTR) each bind phosphate.

This sequence belongs to the RNase PH family. Homohexameric ring arranged as a trimer of dimers.

It catalyses the reaction tRNA(n+1) + phosphate = tRNA(n) + a ribonucleoside 5'-diphosphate. Phosphorolytic 3'-5' exoribonuclease that plays an important role in tRNA 3'-end maturation. Removes nucleotide residues following the 3'-CCA terminus of tRNAs; can also add nucleotides to the ends of RNA molecules by using nucleoside diphosphates as substrates, but this may not be physiologically important. Probably plays a role in initiation of 16S rRNA degradation (leading to ribosome degradation) during starvation. The protein is Ribonuclease PH of Aliivibrio fischeri (strain ATCC 700601 / ES114) (Vibrio fischeri).